The sequence spans 460 residues: Phosphoenolpyruvate carboxylase (460 aa).

Belongs to the PEPCase type 2 family. Homotetramer. The cofactor is Mg(2+).

The catalysed reaction is oxaloacetate + phosphate = phosphoenolpyruvate + hydrogencarbonate. Functionally, catalyzes the irreversible beta-carboxylation of phosphoenolpyruvate (PEP) to form oxaloacetate (OAA), a four-carbon dicarboxylic acid source for the tricarboxylic acid cycle. The chain is Phosphoenolpyruvate carboxylase from Pyrobaculum aerophilum (strain ATCC 51768 / DSM 7523 / JCM 9630 / CIP 104966 / NBRC 100827 / IM2).